The sequence spans 595 residues: Actin-histidine N-methyltransferase (595 aa).

A disordered region spans residues 1–22; sequence MGKKSRVKTQKSGTGATATVSP. Over residues 10-20 the composition is skewed to polar residues; it reads QKSGTGATATV. Residues Arg75, 104 to 106, Arg254, 275 to 279, and 325 to 327 each bind S-adenosyl-L-methionine; these read EGF, DMCNH, and SGF. The 221-residue stretch at 94–314 folds into the SET domain; sequence EGFEMVNFKE…AGEQIYIFYG (221 aa). At Ser513 the chain carries Phosphoserine. A compositionally biased stretch (polar residues) spans 549–572; the sequence is ENGLVNGENSVPNGTRSENENLNQ. Residues 549 to 595 are disordered; the sequence is ENGLVNGENSVPNGTRSENENLNQEESKRAVEDAKGSSSDNTAEVKE. Basic and acidic residues predominate over residues 573-583; that stretch reads EESKRAVEDAK. Over residues 584-595 the composition is skewed to polar residues; the sequence is GSSSDNTAEVKE.

It belongs to the class V-like SAM-binding methyltransferase superfamily. SETD3 actin-histidine methyltransferase family. As to quaternary structure, interacts with MYOD1. Post-translationally, phosphorylated by GSK3B, which is required for recognition by the SCF(FBXW7) complex and subsequent degradation. Ubiquitinated by the SCF(FBXW7) complex following phosphorylation by GSK3B, leading to its degradation by the proteasome.

It localises to the cytoplasm. The protein resides in the nucleus. The catalysed reaction is L-histidyl-[protein] + S-adenosyl-L-methionine = N(tele)-methyl-L-histidyl-[protein] + S-adenosyl-L-homocysteine + H(+). Functionally, protein-histidine N-methyltransferase that specifically mediates 3-methylhistidine (tele-methylhistidine) methylation of actin at 'His-73'. Histidine methylation of actin is required for smooth muscle contraction of the laboring uterus during delivery. Does not have protein-lysine N-methyltransferase activity and probably only catalyzes histidine methylation of actin. In Papio anubis (Olive baboon), this protein is Actin-histidine N-methyltransferase.